Here is a 381-residue protein sequence, read N- to C-terminus: Mannitol-1-phosphate 5-dehydrogenase (381 aa).

Residue 3 to 14 (TLHFGAGNIGRG) participates in NAD(+) binding.

Belongs to the mannitol dehydrogenase family.

The enzyme catalyses D-mannitol 1-phosphate + NAD(+) = beta-D-fructose 6-phosphate + NADH + H(+). In Aeromonas salmonicida (strain A449), this protein is Mannitol-1-phosphate 5-dehydrogenase.